The sequence spans 539 residues: MRVNNLTPQDLKAYGINDVQDIVYNPSYDTLYQEELNPGLEGYERGVLTNLGAVAVDTGIFTGRSPKDKYIVRDDTTRDTLWWSDKGKGKNDNKPLSQETWQHLKGLVTHQLSGKRLFIVDTFCGANADTRLSVRFITEVAWQAHFVKNMFIRPTDEELVGFKPDFIVMNGAKCTNPQWKEQGLNSENFVAFNLTERIQLIGGTWYGGEMKKGMFSVMNYLLPLKGIASMHCSANVGEKGDVAVFFGLSGTGKTTLSTDPKRRLIGDDEHGWDDDGVFNFEGGCYAKTIKLSKEAEPEIYHAIRRDALLENVTVREDGTVDFDDGSKTENTRVSYPIYHIDNIVKPVSKAGHATKVIFLTADAFGVLPPVSRLTANQTQYHFLSGFTAKLAGTERGVTEPTPTFSACFGAAFLTLHPTQYAEVLVKRMQAAGAQAYLVNTGWNGTGKRISIKDTRAIIDAILNGSLDNAETFRLPLFDLAIPTELPGVDTHILDPRNTYASPEQWQEKATALAKLFIENFEKYTDTPAGEALVSAGPKL.

Positions 64, 206, and 212 each coordinate substrate. ATP is bound by residues K212, H231, and 247 to 255; that span reads GLSGTGKTT. Mn(2+)-binding residues include K212 and H231. D268 lines the Mn(2+) pocket. Residues E296, R332, 448–449, and T454 contribute to the ATP site; that span reads RI. A substrate-binding site is contributed by R332.

The protein belongs to the phosphoenolpyruvate carboxykinase (ATP) family. In terms of assembly, monomer. It depends on Mn(2+) as a cofactor.

It is found in the cytoplasm. The catalysed reaction is oxaloacetate + ATP = phosphoenolpyruvate + ADP + CO2. The protein operates within carbohydrate biosynthesis; gluconeogenesis. Functionally, involved in the gluconeogenesis. Catalyzes the conversion of oxaloacetate (OAA) to phosphoenolpyruvate (PEP) through direct phosphoryl transfer between the nucleoside triphosphate and OAA. This is Phosphoenolpyruvate carboxykinase (ATP) from Salmonella choleraesuis (strain SC-B67).